Consider the following 45-residue polypeptide: Large ribosomal subunit protein bL34 (45 aa).

Belongs to the bacterial ribosomal protein bL34 family.

This Clavibacter michiganensis subsp. michiganensis (strain NCPPB 382) protein is Large ribosomal subunit protein bL34.